The sequence spans 360 residues: Peptide chain release factor 1 (360 aa).

An N5-methylglutamine modification is found at Gln-235. Residues 284-293 (QKRQQEEAST) are compositionally biased toward basic and acidic residues. The segment at 284 to 305 (QKRQQEEASTRRNLLGSGDRSD) is disordered.

Belongs to the prokaryotic/mitochondrial release factor family. Methylated by PrmC. Methylation increases the termination efficiency of RF1.

It is found in the cytoplasm. Functionally, peptide chain release factor 1 directs the termination of translation in response to the peptide chain termination codons UAG and UAA. The polypeptide is Peptide chain release factor 1 (Pectobacterium carotovorum subsp. carotovorum (strain PC1)).